Here is a 256-residue protein sequence, read N- to C-terminus: MNNIWWQTKGQGNVHLVLLHGWGLNAEVWRCIDEELSSHFTLHLVDLPGFGRSRGFGALSLADMAEVVLRQAPDKAIWLGWSLGGLVASQIALTHPERVLALVTVASSPCFSARDEWPGIKPDVLAGFQQQLSDDFQRTVERFLALQTMGTETARQDARALKKTVLALPMPEVDVLNGGLEILKTVDLRLPLQNVSMPFLRLYGYLDGLVPRKVVPMLDKLWPHSESYIFAKAAHAPFISHPVEFHHLLVALKQRV.

The region spanning 15–242 is the AB hydrolase-1 domain; that stretch reads HLVLLHGWGL…AAHAPFISHP (228 aa). Substrate-binding positions include Trp-22, 82 to 83, and 143 to 147; these read SL and FLALQ. The Nucleophile role is filled by Ser-82. Active-site residues include Asp-207 and His-235. His-235 is a binding site for substrate.

It belongs to the AB hydrolase superfamily. Carboxylesterase BioH family. In terms of assembly, monomer.

The protein localises to the cytoplasm. It carries out the reaction 6-carboxyhexanoyl-[ACP] methyl ester + H2O = 6-carboxyhexanoyl-[ACP] + methanol + H(+). Its pathway is cofactor biosynthesis; biotin biosynthesis. In terms of biological role, the physiological role of BioH is to remove the methyl group introduced by BioC when the pimeloyl moiety is complete. It allows to synthesize pimeloyl-ACP via the fatty acid synthetic pathway through the hydrolysis of the ester bonds of pimeloyl-ACP esters. This is Pimeloyl-[acyl-carrier protein] methyl ester esterase from Escherichia coli O6:K15:H31 (strain 536 / UPEC).